A 201-amino-acid chain; its full sequence is Charged multivesicular body protein 6 (201 aa).

The N-myristoyl glycine moiety is linked to residue G2. A coiled-coil region spans residues 10-145; sequence QSRVTEQDKA…YQRQIDELLA (136 aa). Position 119 is a phosphoserine (S119). At T130 the chain carries Phosphothreonine. The short motif at 168 to 179 is the Type-2 MIT-interacting motif element; that stretch reads IELPEVPSEPLP. Residues 170-181 are interaction with VPS4A; the sequence is LPEVPSEPLPEK.

It belongs to the SNF7 family. As to quaternary structure, probable core component of the endosomal sorting required for transport complex III (ESCRT-III). ESCRT-III components are thought to multimerize to form a flat lattice on the perimeter membrane of the endosome. Several assembly forms of ESCRT-III may exist that interact and act sequentially. Interacts with VPS4A; the interaction is direct. Interacts with VPS4B; the interaction is direct. Interacts with CHMP4A, CHMP4B and CHMP4C. Interacts with SNF8, VPS25 and VPS36. In terms of processing, ISGylated in a CHMP5-dependent manner. Isgylation weakens its interaction with VPS4A. In terms of tissue distribution, ubiquitously expressed.

The protein localises to the endomembrane system. Its subcellular location is the endosome membrane. It localises to the late endosome membrane. The protein resides in the membrane. In terms of biological role, probable core component of the endosomal sorting required for transport complex III (ESCRT-III) which is involved in multivesicular bodies (MVBs) formation and sorting of endosomal cargo proteins into MVBs. MVBs contain intraluminal vesicles (ILVs) that are generated by invagination and scission from the limiting membrane of the endosome and mostly are delivered to lysosomes enabling degradation of membrane proteins, such as stimulated growth factor receptors, lysosomal enzymes and lipids. The MVB pathway appears to require the sequential function of ESCRT-O, -I,-II and -III complexes. ESCRT-III proteins mostly dissociate from the invaginating membrane before the ILV is released. The ESCRT machinery also functions in topologically equivalent membrane fission events, such as the terminal stages of cytokinesis and the budding of enveloped viruses (HIV-1 and other lentiviruses). ESCRT-III proteins are believed to mediate the necessary vesicle extrusion and/or membrane fission activities, possibly in conjunction with the AAA ATPase VPS4. In the ESCRT-III complex, it probably serves as an acceptor for the ESCRT-II complex on endosomal membranes. The protein is Charged multivesicular body protein 6 (CHMP6) of Homo sapiens (Human).